Reading from the N-terminus, the 460-residue chain is Putative E3 ubiquitin-protein ligase RING1b (460 aa).

The segment at 1-85 is disordered; that stretch reads MPSLKSFSAA…SQSSSAGELS (85 aa). The segment covering 21–31 has biased composition (basic and acidic residues); the sequence is SEAERFNPEAV. Composition is skewed to acidic residues over residues 32-51 and 59-71; these read EKEE…DEED and EAED…EEED. The segment at 103-143 adopts an RING-type zinc-finger fold; sequence CSICLGIIRKTRTVMECLHRFCRECIDKSMRLGNNECPTCR. Residues 196 to 300 form a disordered region; that stretch reads QVSQRQSKAL…TEQTHQRDSR (105 aa). Basic residues predominate over residues 220 to 234; sequence RSRRSGGGSRRRRNC. A compositionally biased stretch (acidic residues) spans 240 to 249; that stretch reads DTSEANDDDD. Over residues 250-265 the composition is skewed to basic and acidic residues; it reads QNKRGKDSSSDEPCER. Low complexity predominate over residues 276–290; that stretch reads SSSNANNNDNCAGNG.

Heterodimer with RING1A. Interacts with CLF. Component of the PRC1-like complex, at least composed of RING1A, RING1B and LHP1.

Its subcellular location is the nucleus. It catalyses the reaction S-ubiquitinyl-[E2 ubiquitin-conjugating enzyme]-L-cysteine + [acceptor protein]-L-lysine = [E2 ubiquitin-conjugating enzyme]-L-cysteine + N(6)-ubiquitinyl-[acceptor protein]-L-lysine.. Its pathway is protein modification; protein ubiquitination. Functionally, putative E3 ubiquitin-protein ligase that mediates monoubiquitination of 'Lys-119' of histone H2A (H2AK119ub), thereby playing a central role in histone code and gene regulation. Its function is as follows. As part of the PRC1-like complex, repress class I KNOX gene expression. PcG PRC1 complex maintains the transcriptionally repressive state of many genes, including Hox genes, throughout development. PcG PRC1 complex acts via chromatin remodeling and modification of histones, rendering chromatin heritably changed in its expressibility. The sequence is that of Putative E3 ubiquitin-protein ligase RING1b (RING1B) from Arabidopsis thaliana (Mouse-ear cress).